The chain runs to 467 residues: Peptidoglycan-N-acetylmuramic acid deacetylase PdaC (467 aa).

The helical transmembrane segment at 6 to 26 (IKWFHVLIAVVCVVGLIGFFH) threads the bilayer. Residues 278–452 (KVIALTFDDG…KLTDQGYQLV (175 aa)) enclose the NodB homology domain. The active-site Proton acceptor is aspartate 285. A divalent metal cation contacts are provided by aspartate 286, histidine 336, and histidine 340. Histidine 427 serves as the catalytic Proton donor.

It in the N-terminal section; belongs to the RsiV family. This sequence in the C-terminal section; belongs to the polysaccharide deacetylase family.

It is found in the cell membrane. With respect to regulation, activated by divalent metal cations; Mn(2+) is the most efficient, followed by Ca(2+) and Mg(2+). In contrast to PgdA from S.pneumoniae, these ions are not absolutely required for deacetylase activity. Catalyzes the deacetylation of N-acetylmuramic acid (MurNAc) residues in peptidoglycan, a modification that confers resistance to lysosyme. Is not able to deacetylate N-acetylglucosamine (GlcNAc) residues in peptidoglycan, but can deacylate chitin oligomers such as GlcNAc4 and GlcNAc5. Is essentially not active toward chitosan (partially deacetylated GlcNAc polymer) and has very low activity toward chitin (GlcNAc polymer). Does not deacetylate GlcNAc. This is Peptidoglycan-N-acetylmuramic acid deacetylase PdaC (pdaC) from Bacillus subtilis (strain 168).